The sequence spans 501 residues: Pyruvate kinase (501 aa).

R50 is a substrate binding site. K(+) is bound by residues N52, S54, D85, and T86. 52–55 (NFSH) contacts ATP. Positions 92 and 178 each coordinate ATP. E243 contacts Mg(2+). 3 residues coordinate substrate: G266, D267, and T299. Position 267 (D267) interacts with Mg(2+).

It belongs to the pyruvate kinase family. Homotetramer. It depends on Mg(2+) as a cofactor. K(+) is required as a cofactor.

The catalysed reaction is pyruvate + ATP = phosphoenolpyruvate + ADP + H(+). It participates in carbohydrate degradation; glycolysis; pyruvate from D-glyceraldehyde 3-phosphate: step 5/5. This is Pyruvate kinase (PYK1) from Naumovozyma castellii (Yeast).